A 268-amino-acid polypeptide reads, in one-letter code: Ribosomal RNA small subunit methyltransferase A (268 aa).

S-adenosyl-L-methionine is bound by residues N18, L20, G45, E66, D91, and N112.

It belongs to the class I-like SAM-binding methyltransferase superfamily. rRNA adenine N(6)-methyltransferase family. RsmA subfamily.

It is found in the cytoplasm. It catalyses the reaction adenosine(1518)/adenosine(1519) in 16S rRNA + 4 S-adenosyl-L-methionine = N(6)-dimethyladenosine(1518)/N(6)-dimethyladenosine(1519) in 16S rRNA + 4 S-adenosyl-L-homocysteine + 4 H(+). Its function is as follows. Specifically dimethylates two adjacent adenosines (A1518 and A1519) in the loop of a conserved hairpin near the 3'-end of 16S rRNA in the 30S particle. May play a critical role in biogenesis of 30S subunits. The sequence is that of Ribosomal RNA small subunit methyltransferase A from Shewanella baltica (strain OS223).